A 345-amino-acid chain; its full sequence is Protein RecA (345 aa).

63 to 70 (GPESSGKT) provides a ligand contact to ATP. The segment at 326-345 (VLSDALMTDPEPDADGTPED) is disordered. Over residues 335–345 (PEPDADGTPED) the composition is skewed to acidic residues.

This sequence belongs to the RecA family.

It localises to the cytoplasm. In terms of biological role, can catalyze the hydrolysis of ATP in the presence of single-stranded DNA, the ATP-dependent uptake of single-stranded DNA by duplex DNA, and the ATP-dependent hybridization of homologous single-stranded DNAs. It interacts with LexA causing its activation and leading to its autocatalytic cleavage. In Gluconobacter oxydans (strain 621H) (Gluconobacter suboxydans), this protein is Protein RecA.